The primary structure comprises 156 residues: Large ribosomal subunit protein bL17 (156 aa).

The disordered stretch occupies residues 127–156 (RATRAAASKKAAEEKAAEAAEEKDEAAEEK). Residues 136 to 146 (KAAEEKAAEAA) show a composition bias toward basic and acidic residues. Over residues 147 to 156 (EEKDEAAEEK) the composition is skewed to acidic residues.

The protein belongs to the bacterial ribosomal protein bL17 family. Part of the 50S ribosomal subunit. Contacts protein L32.

The protein is Large ribosomal subunit protein bL17 of Corynebacterium urealyticum (strain ATCC 43042 / DSM 7109).